The following is a 119-amino-acid chain: Large ribosomal subunit protein uL18 (119 aa).

The protein belongs to the universal ribosomal protein uL18 family. In terms of assembly, part of the 50S ribosomal subunit; part of the 5S rRNA/L5/L18/L25 subcomplex. Contacts the 5S and 23S rRNAs.

In terms of biological role, this is one of the proteins that bind and probably mediate the attachment of the 5S RNA into the large ribosomal subunit, where it forms part of the central protuberance. The sequence is that of Large ribosomal subunit protein uL18 from Jannaschia sp. (strain CCS1).